The following is a 210-amino-acid chain: dITP/XTP pyrophosphatase (210 aa).

13–18 (THNPGK) serves as a coordination point for substrate. 2 residues coordinate Mg(2+): Asp-45 and Asp-74. Residue Asp-74 is the Proton acceptor of the active site. Substrate-binding positions include Ser-75, 160–163 (FGYD), Lys-183, and 195–196 (HR).

This sequence belongs to the HAM1 NTPase family. As to quaternary structure, homodimer. Requires Mg(2+) as cofactor.

It catalyses the reaction XTP + H2O = XMP + diphosphate + H(+). It carries out the reaction dITP + H2O = dIMP + diphosphate + H(+). The catalysed reaction is ITP + H2O = IMP + diphosphate + H(+). Pyrophosphatase that catalyzes the hydrolysis of nucleoside triphosphates to their monophosphate derivatives, with a high preference for the non-canonical purine nucleotides XTP (xanthosine triphosphate), dITP (deoxyinosine triphosphate) and ITP. Seems to function as a house-cleaning enzyme that removes non-canonical purine nucleotides from the nucleotide pool, thus preventing their incorporation into DNA/RNA and avoiding chromosomal lesions. In Rhodopseudomonas palustris (strain ATCC BAA-98 / CGA009), this protein is dITP/XTP pyrophosphatase.